The following is a 115-amino-acid chain: Large ribosomal subunit protein bL20 (115 aa).

Belongs to the bacterial ribosomal protein bL20 family.

Binds directly to 23S ribosomal RNA and is necessary for the in vitro assembly process of the 50S ribosomal subunit. It is not involved in the protein synthesizing functions of that subunit. The polypeptide is Large ribosomal subunit protein bL20 (Synechococcus sp. (strain CC9311)).